We begin with the raw amino-acid sequence, 319 residues long: Malate dehydrogenase (319 aa).

NAD(+) is bound by residues 10-15 (GAGNIG) and Asp34. 2 residues coordinate substrate: Arg83 and Arg89. Residues Asn96 and 119-121 (ITN) each bind NAD(+). Residues Asn121 and Arg152 each coordinate substrate. His176 (proton acceptor) is an active-site residue.

This sequence belongs to the LDH/MDH superfamily. MDH type 3 family.

It catalyses the reaction (S)-malate + NAD(+) = oxaloacetate + NADH + H(+). In terms of biological role, catalyzes the reversible oxidation of malate to oxaloacetate. This Francisella tularensis subsp. mediasiatica (strain FSC147) protein is Malate dehydrogenase.